Here is a 113-residue protein sequence, read N- to C-terminus: Large ribosomal subunit protein eL33 (113 aa).

It belongs to the eukaryotic ribosomal protein eL33 family.

The sequence is that of Large ribosomal subunit protein eL33 (RPL35A) from Tetrahymena thermophila (strain SB210).